Reading from the N-terminus, the 323-residue chain is Beta-ketoacyl-[acyl-carrier-protein] synthase III (323 aa).

Residues C112 and H248 contribute to the active site. The tract at residues 249 to 253 (QANRR) is ACP-binding. N278 is a catalytic residue.

This sequence belongs to the thiolase-like superfamily. FabH family. As to quaternary structure, homodimer.

The protein localises to the cytoplasm. It catalyses the reaction malonyl-[ACP] + acetyl-CoA + H(+) = 3-oxobutanoyl-[ACP] + CO2 + CoA. It participates in lipid metabolism; fatty acid biosynthesis. Catalyzes the condensation reaction of fatty acid synthesis by the addition to an acyl acceptor of two carbons from malonyl-ACP. Catalyzes the first condensation reaction which initiates fatty acid synthesis and may therefore play a role in governing the total rate of fatty acid production. Possesses both acetoacetyl-ACP synthase and acetyl transacylase activities. Its substrate specificity determines the biosynthesis of branched-chain and/or straight-chain of fatty acids. This chain is Beta-ketoacyl-[acyl-carrier-protein] synthase III, found in Streptococcus agalactiae serotype Ia (strain ATCC 27591 / A909 / CDC SS700).